The primary structure comprises 493 residues: Arginine decarboxylase (493 aa).

The residue at position 229 (lysine 229) is an N6-(pyridoxal phosphate)lysine.

This sequence belongs to the Orn/Lys/Arg decarboxylase class-I family. It depends on pyridoxal 5'-phosphate as a cofactor.

The protein localises to the cytoplasm. It carries out the reaction L-arginine + H(+) = agmatine + CO2. It functions in the pathway amine and polyamine biosynthesis; agmatine biosynthesis; agmatine from L-arginine: step 1/1. Its function is as follows. Catalyzes the formation of agmatine from arginine. This Bacillus anthracis protein is Arginine decarboxylase (speA).